The sequence spans 184 residues: MLRRRGFCCCSGAPAAAAAALLLLAVAAAAPRAAGFHLGGDESVLVRGMLAAIRREQAEAEDAARFAVAEYNKNQGAELEFARIVKAKRQVVTGTLHDLMLEVVDSGKKSLYSAKVWVKPWLDFKAVVEFRHVGDSQSQSATAADDNAGQDTADPTVASRNDLHNTENNKVSVVLSTFSQTYSV.

The signal sequence occupies residues 1–35; it reads MLRRRGFCCCSGAPAAAAAALLLLAVAAAAPRAAG. In terms of domain architecture, Cystatin spans 48–134; that stretch reads GMLAAIRREQ…KAVVEFRHVG (87 aa). A Secondary area of contact motif is present at residues 90-94; the sequence is QVVTG. The tract at residues 138–165 is disordered; it reads SQSATAADDNAGQDTADPTVASRNDLHN.

This sequence belongs to the cystatin family. Phytocystatin subfamily.

It is found in the secreted. In terms of biological role, specific inhibitor of cysteine proteinases. Probably involved in the regulation of endogenous processes and in defense against pests and pathogens. The polypeptide is Cysteine proteinase inhibitor 3 (Oryza sativa subsp. japonica (Rice)).